The chain runs to 263 residues: Putative alpha/beta hydrolase L404 (263 aa).

Gly2 is lipidated: N-myristoyl glycine; by host.

The protein belongs to the AB hydrolase superfamily.

The sequence is that of Putative alpha/beta hydrolase L404 from Acanthamoeba polyphaga (Amoeba).